Consider the following 108-residue polypeptide: X antigen family member 5 (108 aa).

Residues 20 to 108 (VGPMLEPSVP…PEGGEGKPQL (89 aa)) form a disordered region. Basic and acidic residues-rich tracts occupy residues 40-52 (SQDH…REDD) and 94-108 (EQFK…KPQL).

Belongs to the GAGE family.

This is X antigen family member 5 (XAGE5) from Homo sapiens (Human).